The chain runs to 301 residues: D-alanine--D-alanine ligase (301 aa).

Positions 99–294 constitute an ATP-grasp domain; sequence KCILKAANIR…FPELIDMIID (196 aa). Residue 126–181 coordinates ATP; it reads IEKMGYPVVVKPTHGGSSVATFIIKEEKDIKDAVIEGFKWDSEVIIEKFIKGDEIT. Residues aspartate 248, glutamate 261, and asparagine 263 each contribute to the Mg(2+) site.

This sequence belongs to the D-alanine--D-alanine ligase family. The cofactor is Mg(2+). Mn(2+) serves as cofactor.

The protein resides in the cytoplasm. The enzyme catalyses 2 D-alanine + ATP = D-alanyl-D-alanine + ADP + phosphate + H(+). It functions in the pathway cell wall biogenesis; peptidoglycan biosynthesis. In terms of biological role, cell wall formation. The sequence is that of D-alanine--D-alanine ligase from Clostridium botulinum (strain Alaska E43 / Type E3).